A 618-amino-acid chain; its full sequence is DNA mismatch repair protein MutL (618 aa).

Residues 366 to 378 (AEPTAAREPATPR) are compositionally biased toward low complexity. Positions 366-403 (AEPTAAREPATPRYSDGASGGNGGRQSAGGWPHAQPGY) are disordered. Residues 383-392 (ASGGNGGRQS) show a composition bias toward gly residues.

Belongs to the DNA mismatch repair MutL/HexB family.

Its function is as follows. This protein is involved in the repair of mismatches in DNA. It is required for dam-dependent methyl-directed DNA mismatch repair. May act as a 'molecular matchmaker', a protein that promotes the formation of a stable complex between two or more DNA-binding proteins in an ATP-dependent manner without itself being part of a final effector complex. In Salmonella typhi, this protein is DNA mismatch repair protein MutL.